A 275-amino-acid chain; its full sequence is Elongation factor Ts (275 aa).

An involved in Mg(2+) ion dislocation from EF-Tu region spans residues 76–79; it reads TDFV.

The protein belongs to the EF-Ts family.

The protein localises to the cytoplasm. In terms of biological role, associates with the EF-Tu.GDP complex and induces the exchange of GDP to GTP. It remains bound to the aminoacyl-tRNA.EF-Tu.GTP complex up to the GTP hydrolysis stage on the ribosome. This chain is Elongation factor Ts, found in Corynebacterium glutamicum (strain ATCC 13032 / DSM 20300 / JCM 1318 / BCRC 11384 / CCUG 27702 / LMG 3730 / NBRC 12168 / NCIMB 10025 / NRRL B-2784 / 534).